We begin with the raw amino-acid sequence, 434 residues long: Methylenetetrahydrofolate--tRNA-(uracil-5-)-methyltransferase TrmFO (434 aa).

FAD is bound at residue 10–15; sequence GAGLAG.

The protein belongs to the MnmG family. TrmFO subfamily. It depends on FAD as a cofactor.

Its subcellular location is the cytoplasm. It carries out the reaction uridine(54) in tRNA + (6R)-5,10-methylene-5,6,7,8-tetrahydrofolate + NADH + H(+) = 5-methyluridine(54) in tRNA + (6S)-5,6,7,8-tetrahydrofolate + NAD(+). The catalysed reaction is uridine(54) in tRNA + (6R)-5,10-methylene-5,6,7,8-tetrahydrofolate + NADPH + H(+) = 5-methyluridine(54) in tRNA + (6S)-5,6,7,8-tetrahydrofolate + NADP(+). Functionally, catalyzes the folate-dependent formation of 5-methyl-uridine at position 54 (M-5-U54) in all tRNAs. The chain is Methylenetetrahydrofolate--tRNA-(uracil-5-)-methyltransferase TrmFO from Bacillus cytotoxicus (strain DSM 22905 / CIP 110041 / 391-98 / NVH 391-98).